A 469-amino-acid chain; its full sequence is Pancreatic lipase-related protein 2 (469 aa).

The N-terminal stretch at 1-17 (MLPPWTLGLLLLATVRG) is a signal peptide. A disulfide bridge links cysteine 21 with cysteine 27. The tract at residues 93-105 (IHGFLDKAEDSWP) is required for galactolipase activity. A disulfide bridge connects residues cysteine 109 and cysteine 120. The active-site Nucleophile is the serine 171. Residue aspartate 195 is the Charge relay system of the active site. Residues glutamate 206, arginine 209, aspartate 211, and aspartate 214 each contribute to the Ca(2+) site. Cysteine 256 and cysteine 280 are oxidised to a cystine. Residues 257–279 (KKNVLSTITDIDGIWEGIGGFVS) form a required for galactolipase activity region. Histidine 282 serves as the catalytic Charge relay system. Intrachain disulfides connect cysteine 304–cysteine 315 and cysteine 318–cysteine 323. N-linked (GlcNAc...) asparagine glycosylation is found at asparagine 353 and asparagine 428. The region spanning 357 to 469 (WRYKISVTLS…ENVLQSLYPC (113 aa)) is the PLAT domain. Cysteine 453 and cysteine 469 are oxidised to a cystine.

Belongs to the AB hydrolase superfamily. Lipase family. Pancreas.

The protein localises to the secreted. It is found in the zymogen granule membrane. Its subcellular location is the cell projection. The protein resides in the neuron projection. It carries out the reaction a triacylglycerol + H2O = a diacylglycerol + a fatty acid + H(+). The catalysed reaction is a 1,2-diacyl-3-O-(beta-D-galactosyl)-sn-glycerol + 2 H2O = 3-beta-D-galactosyl-sn-glycerol + 2 a fatty acid + 2 H(+). The enzyme catalyses 1,2,3-tri-(9Z-octadecenoyl)-glycerol + H2O = di-(9Z)-octadecenoylglycerol + (9Z)-octadecenoate + H(+). It catalyses the reaction di-(9Z)-octadecenoylglycerol + H2O = (9Z-octadecenoyl)-glycerol + (9Z)-octadecenoate + H(+). It carries out the reaction (9Z-octadecenoyl)-glycerol + H2O = glycerol + (9Z)-octadecenoate + H(+). The catalysed reaction is 1-(9Z-octadecenoyl)-glycerol + H2O = glycerol + (9Z)-octadecenoate + H(+). The enzyme catalyses 1,2,3-tripropanoylglycerol + H2O = dipropanoylglycerol + propanoate + H(+). It catalyses the reaction 1,2,3-tributanoylglycerol + H2O = dibutanoylglycerol + butanoate + H(+). It carries out the reaction 1,2,3-trioctanoylglycerol + H2O = dioctanoylglycerol + octanoate + H(+). The catalysed reaction is 1,2-didecanoylglycerol + H2O = decanoylglycerol + decanoate + H(+). The enzyme catalyses long chain 1,2-diacyl-3-O-beta-D-galactosyl-sn-glycerol + H2O = long chain acyl-3-O-beta-D-galactosyl-sn-glycerol + a fatty acid + H(+). It catalyses the reaction 1,2-dioctanoyl-3-O-beta-D-galactosyl-sn-glycerol + H2O = octanoyl-3-(beta-D-galactosyl)-sn-glycerol + octanoate + H(+). It carries out the reaction 1,2-didodecanoyl-3-beta-D-galactosyl-sn-glycerol + H2O = dodecanoyl-3-beta-D-galactosyl-sn-glycerol + dodecanoate + H(+). The catalysed reaction is 1-beta-D-galactosyl-2,3-didodecanoyl-sn-glycerol + H2O = 1-beta-D-galactosyl-dodecanoyl-sn-glycerol + dodecanoate + H(+). The enzyme catalyses a 1,2-diacyl-3-O-[alpha-D-galactosyl-(1-&gt;6)-beta-D-galactosyl]-sn-glycerol + H2O = acyl-3-O-[alpha-D-galactosyl-(1-&gt;6)-beta-D-galactosyl]-sn-glycerol + a fatty acid + H(+). It catalyses the reaction long chain 1,2-diacyl-3-O-[alpha-D-galactosyl-(1-&gt;6)-beta-D-galactosyl]-sn-glycerol + H2O = long chain acyl-3-O-[alpha-D-galactosyl-(1-&gt;6)-beta-D-galactosyl]-sn-glycerol + a fatty acid + H(+). It carries out the reaction 1,2-dioctanoyl-3-O-[alpha-D-galactosyl-(1-&gt;6)-beta-D-galactosyl]-sn-glycerol + H2O = octanoyl-3-O-[alpha-D-galactosyl-(1-&gt;6)-beta-D-galactosyl]-sn-glycerol + octanoate + H(+). The catalysed reaction is 1,2-didodecanoyl-3-O-[alpha-D-galactosyl-(1-&gt;6)-beta-D-galactosyl]-sn-glycerol + H2O = dodecanoyl-3-O-[alpha-D-galactosyl-(1-&gt;6)-beta-D-galactosyl]-sn-glycerol + dodecanoate + H(+). The enzyme catalyses a 1,2-diacyl-sn-glycero-3-phosphocholine + H2O = a monoacyl-sn-glycero-3-phosphocholine + a fatty acid + H(+). The protein operates within glycerolipid metabolism; triacylglycerol degradation. It functions in the pathway glycolipid metabolism. Its activity is regulated as follows. Regulated by CLPS and bile salts levels ranging 1-5 mM in neonates and 2-30 mM in healthy adults. CLPS stimulates milk fat digestion in the presence of 4 mM bile salts. Triacylglycerol lipase activity toward short- and medium-chain triglycerides is inhibited by increasing concentrations of bile salts and weakly reactivated by CLPS. Optimal triacylglycerol lipase activity is reached at bile salts concentrations ranging from 0.1 to 0.5 mM and then decreases at concentrations higher than 1 mM. Lipase activity toward long-chain glycerolipids is stimulated by CLPS in the presence of 4 mM bile salts. Galactolipase activity is inhibited at high concentrations of bile salts. Triacylglycerol lipase activity is inhibited by anti-obesity drug tetrahydrolipstatin. Lipase that primarily hydrolyzes triglycerides and galactosylglycerides. In neonates, may play a major role in pancreatic digestion of dietary fats such as milk fat globules enriched in long-chain triglycerides. Hydrolyzes short-, medium- and long-chain fatty acyls in triglycerides without apparent positional specificity. Can completely deacylate triacylglycerols. When the liver matures and bile salt synthesis increases, likely functions mainly as a galactolipase and monoacylglycerol lipase. Hydrolyzes monogalactosyldiglycerols (MGDG) and digalactosyldiacylglycerols (DGDG) present in a plant-based diet, releasing long-chain polyunsaturated fatty acids. Hydrolyzes medium- and long-chain fatty acyls in galactolipids. May act together with LIPF to hydrolyze partially digested triglycerides. Hydrolyzes long-chain monoglycerides with high efficiency. In cytotoxic T cells, contributes to perforin-dependent cell lysis, but is unlikely to mediate direct cytotoxicity. Also has low phospholipase activity. In neurons, required for the localization of the phospholipid 1-oleoyl-2-palmitoyl-PC (OPPC) to neurite tips through acyl chain remodeling of membrane phospholipids. The resulting OPPC-rich lipid membrane domain recruits the t-SNARE protein STX4 by selectively interacting with the STX4 transmembrane domain and this promotes surface expression of the dopamine transporter SLC6A3/DAT at neurite tips by facilitating fusion of SLC6A3-containing transport vesicles with the plasma membrane. The sequence is that of Pancreatic lipase-related protein 2 from Homo sapiens (Human).